The chain runs to 191 residues: Endoribonuclease YbeY (191 aa).

Positions 122, 126, and 132 each coordinate Zn(2+). The interval 164–191 is disordered; sequence QPKPSGPKAFPDAAERAELDKEVPGGGI. Basic and acidic residues predominate over residues 176-191; sequence AAERAELDKEVPGGGI.

The protein belongs to the endoribonuclease YbeY family. Zn(2+) serves as cofactor.

The protein resides in the cytoplasm. In terms of biological role, single strand-specific metallo-endoribonuclease involved in late-stage 70S ribosome quality control and in maturation of the 3' terminus of the 16S rRNA. This chain is Endoribonuclease YbeY, found in Corynebacterium aurimucosum (strain ATCC 700975 / DSM 44827 / CIP 107346 / CN-1) (Corynebacterium nigricans).